The primary structure comprises 200 residues: Recombination protein RecR (200 aa).

The segment at 58–75 adopts a C4-type zinc-finger fold; that stretch reads CPCCFCLKNFPESQCEFC. The 96-residue stretch at 82 to 177 folds into the Toprim domain; the sequence is STLCIVASPK…SISRLALGLP (96 aa).

The protein belongs to the RecR family.

In terms of biological role, may play a role in DNA repair. It seems to be involved in an RecBC-independent recombinational process of DNA repair. It may act with RecF and RecO. This Chlamydia felis (strain Fe/C-56) (Chlamydophila felis) protein is Recombination protein RecR.